Here is a 390-residue protein sequence, read N- to C-terminus: Queuine tRNA-ribosyltransferase (390 aa).

The active-site Proton acceptor is the Asp92. Substrate is bound by residues Asp92 to Phe96, Asp146, Gln195, and Gly222. Residues Gly253–Asp259 form an RNA binding region. Asp272 (nucleophile) is an active-site residue. The RNA binding; important for wobble base 34 recognition stretch occupies residues Thr277 to Arg281. Zn(2+)-binding residues include Cys310, Cys312, Cys315, and His354.

Belongs to the queuine tRNA-ribosyltransferase family. As to quaternary structure, homodimer. Within each dimer, one monomer is responsible for RNA recognition and catalysis, while the other monomer binds to the replacement base PreQ1. Zn(2+) serves as cofactor.

It catalyses the reaction 7-aminomethyl-7-carbaguanine + guanosine(34) in tRNA = 7-aminomethyl-7-carbaguanosine(34) in tRNA + guanine. It functions in the pathway tRNA modification; tRNA-queuosine biosynthesis. Catalyzes the base-exchange of a guanine (G) residue with the queuine precursor 7-aminomethyl-7-deazaguanine (PreQ1) at position 34 (anticodon wobble position) in tRNAs with GU(N) anticodons (tRNA-Asp, -Asn, -His and -Tyr). Catalysis occurs through a double-displacement mechanism. The nucleophile active site attacks the C1' of nucleotide 34 to detach the guanine base from the RNA, forming a covalent enzyme-RNA intermediate. The proton acceptor active site deprotonates the incoming PreQ1, allowing a nucleophilic attack on the C1' of the ribose to form the product. After dissociation, two additional enzymatic reactions on the tRNA convert PreQ1 to queuine (Q), resulting in the hypermodified nucleoside queuosine (7-(((4,5-cis-dihydroxy-2-cyclopenten-1-yl)amino)methyl)-7-deazaguanosine). This chain is Queuine tRNA-ribosyltransferase, found in Delftia acidovorans (strain DSM 14801 / SPH-1).